The chain runs to 131 residues: Ribonuclease P protein component (131 aa).

This sequence belongs to the RnpA family. As to quaternary structure, consists of a catalytic RNA component (M1 or rnpB) and a protein subunit.

It carries out the reaction Endonucleolytic cleavage of RNA, removing 5'-extranucleotides from tRNA precursor.. Functionally, RNaseP catalyzes the removal of the 5'-leader sequence from pre-tRNA to produce the mature 5'-terminus. It can also cleave other RNA substrates such as 4.5S RNA. The protein component plays an auxiliary but essential role in vivo by binding to the 5'-leader sequence and broadening the substrate specificity of the ribozyme. The sequence is that of Ribonuclease P protein component from Stutzerimonas stutzeri (strain A1501) (Pseudomonas stutzeri).